The primary structure comprises 102 residues: Large ribosomal subunit protein uL24 (102 aa).

This sequence belongs to the universal ribosomal protein uL24 family. In terms of assembly, part of the 50S ribosomal subunit.

Its function is as follows. One of two assembly initiator proteins, it binds directly to the 5'-end of the 23S rRNA, where it nucleates assembly of the 50S subunit. One of the proteins that surrounds the polypeptide exit tunnel on the outside of the subunit. The polypeptide is Large ribosomal subunit protein uL24 (Burkholderia mallei (strain NCTC 10229)).